The primary structure comprises 389 residues: Tyrosinase-like protein phomQ1 (389 aa).

A helical transmembrane segment spans residues 53 to 73; sequence TIIVVSVITFAAIIGCWVFLS. Positions 141 and 150 each coordinate Cu cation. Residue N220 is glycosylated (N-linked (GlcNAc...) asparagine). 2 residues coordinate Cu cation: H290 and H316.

The protein belongs to the tyrosinase family. It depends on Cu(2+) as a cofactor.

It localises to the membrane. It participates in mycotoxin biosynthesis. Its function is as follows. Tyrosinase-like protein; part of the gene cluster that mediates the biosynthesis of the phomopsins, a group of hexapeptide mycotoxins which infects lupins and causes lupinosis disease in livestock. Within the pathway, phomQ1 functions as a halogenase, converting. The pathway starts with the processing of the precursor phomA by several endopeptidases including kexin proteases as well as the cluster-specific S41 family peptidase phomP1 and the oligopeptidase phomG to produce 10 identical copies of the hexapeptide Tyr-Val-Ile-Pro-Ile-Asp. After being excised from the precursor peptide, the core peptides are cyclized and modified post-translationally by enzymes encoded within the gene cluster. The timing and order of proteolysis of the phomA precursor and PTMs are still unknown. Two tyrosinase-like enzymes, phomQ1 and phomQ2, catalyze the chlorination and hydroxylation of Tyr, respectively. PhomYb, is proposed to be involved in the construction of the macrocyclic structure. The other 4 ustYa family proteins may be involved in PTMs that generate the unique structure of phomopsin A. PhomYa is required for the hydroxylation of C-beta of Tyr. PhomYc, phomYd, and phomYe are responsible for the biosynthesis of 2,3-dehydroisoleucine (dIle), 2,3-dehydroaspartic acid (dAsp), and 3,4-dehydroproline (dPro), respectively. While dIle formation by phomYc is indispensable for the installation of dAsp by phomYd, the order of the other PTMs have not been elucidated yet. Most of the biosynthetic enzymes likely have broad substrate specificity, and thus, there might be a metabolic grid from a precursor to phomopsin A. The enzyme(s) responsible for the biosynthesis of 3,4-dehydrovaline (dVal) have also not been identified yet. Finally, phomM acts as an S-adenosylmethionine-dependent alpha-N-methyltransferase that catalyzes two successive N-methylation reactions, converting N-desmethyl-phomopsin A to phomopsin A and phomopsin A further to an N,N-dimethylated congener called phomopsin E. The protein is Tyrosinase-like protein phomQ1 of Diaporthe leptostromiformis (Lupinosis disease fungus).